The chain runs to 525 residues: GMP synthase [glutamine-hydrolyzing] (525 aa).

The region spanning 9–207 (RILILDFGSQ…VRDICQCEAL (199 aa)) is the Glutamine amidotransferase type-1 domain. Cys-86 functions as the Nucleophile in the catalytic mechanism. Active-site residues include His-181 and Glu-183. Positions 208–400 (WTPAKIIDDA…LGLPYDMLYR (193 aa)) constitute a GMPS ATP-PPase domain. Residue 235 to 241 (SGGVDSS) coordinates ATP.

In terms of assembly, homodimer.

It carries out the reaction XMP + L-glutamine + ATP + H2O = GMP + L-glutamate + AMP + diphosphate + 2 H(+). It functions in the pathway purine metabolism; GMP biosynthesis; GMP from XMP (L-Gln route): step 1/1. In terms of biological role, catalyzes the synthesis of GMP from XMP. This is GMP synthase [glutamine-hydrolyzing] from Shigella sonnei (strain Ss046).